Consider the following 397-residue polypeptide: Elongation factor Tu (397 aa).

Residues 10–206 (KPHVNIGTIG…AVDTSIPQPE (197 aa)) form the tr-type G domain. Residues 19 to 26 (GHIDHGKT) are G1. Position 19–26 (19–26 (GHIDHGKT)) interacts with GTP. Thr-26 serves as a coordination point for Mg(2+). Residues 62 to 66 (GITIS) are G2. The segment at 83–86 (DCPG) is G3. GTP contacts are provided by residues 83 to 87 (DCPGH) and 138 to 141 (NKSD). Residues 138-141 (NKSD) are G4. The interval 176–178 (SAL) is G5.

The protein belongs to the TRAFAC class translation factor GTPase superfamily. Classic translation factor GTPase family. EF-Tu/EF-1A subfamily. As to quaternary structure, monomer.

The protein localises to the cytoplasm. It catalyses the reaction GTP + H2O = GDP + phosphate + H(+). Its function is as follows. GTP hydrolase that promotes the GTP-dependent binding of aminoacyl-tRNA to the A-site of ribosomes during protein biosynthesis. The polypeptide is Elongation factor Tu (Salinispora tropica (strain ATCC BAA-916 / DSM 44818 / JCM 13857 / NBRC 105044 / CNB-440)).